A 135-amino-acid chain; its full sequence is Small ribosomal subunit protein uS12 (135 aa).

Asp89 is subject to 3-methylthioaspartic acid. The segment at Asp103–Arg135 is disordered. Positions Met111–Lys123 are enriched in basic residues. Positions Pro124–Arg135 are enriched in low complexity.

This sequence belongs to the universal ribosomal protein uS12 family. Part of the 30S ribosomal subunit. Contacts proteins S8 and S17. May interact with IF1 in the 30S initiation complex.

With S4 and S5 plays an important role in translational accuracy. Its function is as follows. Interacts with and stabilizes bases of the 16S rRNA that are involved in tRNA selection in the A site and with the mRNA backbone. Located at the interface of the 30S and 50S subunits, it traverses the body of the 30S subunit contacting proteins on the other side and probably holding the rRNA structure together. The combined cluster of proteins S8, S12 and S17 appears to hold together the shoulder and platform of the 30S subunit. This chain is Small ribosomal subunit protein uS12, found in Gloeobacter violaceus (strain ATCC 29082 / PCC 7421).